The primary structure comprises 152 residues: Cell division protein SepF (152 aa).

Residues 21 to 56 are disordered; that stretch reads EYIETEQDHPEEHEQQKDKQPAYAQKPQGKQNVVSL. The segment covering 26–40 has biased composition (basic and acidic residues); sequence EQDHPEEHEQQKDKQ.

This sequence belongs to the SepF family. Homodimer. Interacts with FtsZ.

The protein localises to the cytoplasm. In terms of biological role, cell division protein that is part of the divisome complex and is recruited early to the Z-ring. Probably stimulates Z-ring formation, perhaps through the cross-linking of FtsZ protofilaments. Its function overlaps with FtsA. This Bacillus velezensis (strain DSM 23117 / BGSC 10A6 / LMG 26770 / FZB42) (Bacillus amyloliquefaciens subsp. plantarum) protein is Cell division protein SepF.